A 274-amino-acid chain; its full sequence is Protein RecA (274 aa).

Position 43-50 (Gly-43–Thr-50) interacts with ATP.

This sequence belongs to the RecA family.

It localises to the cytoplasm. Functionally, can catalyze the hydrolysis of ATP in the presence of single-stranded DNA, the ATP-dependent uptake of single-stranded DNA by duplex DNA, and the ATP-dependent hybridization of homologous single-stranded DNAs. It interacts with LexA causing its activation and leading to its autocatalytic cleavage. The protein is Protein RecA of Neisseria mucosa.